The chain runs to 497 residues: Guanosine-5'-triphosphate,3'-diphosphate pyrophosphatase (497 aa).

This sequence belongs to the GppA/Ppx family. GppA subfamily.

It carries out the reaction guanosine 3'-diphosphate 5'-triphosphate + H2O = guanosine 3',5'-bis(diphosphate) + phosphate + H(+). It functions in the pathway purine metabolism; ppGpp biosynthesis; ppGpp from GTP: step 2/2. Catalyzes the conversion of pppGpp to ppGpp. Guanosine pentaphosphate (pppGpp) is a cytoplasmic signaling molecule which together with ppGpp controls the 'stringent response', an adaptive process that allows bacteria to respond to amino acid starvation, resulting in the coordinated regulation of numerous cellular activities. The sequence is that of Guanosine-5'-triphosphate,3'-diphosphate pyrophosphatase from Aliivibrio fischeri (strain ATCC 700601 / ES114) (Vibrio fischeri).